The following is a 231-amino-acid chain: UPF0702 transmembrane protein YetF (231 aa).

3 helical membrane passes run 5 to 25 (LSVA…LKLL), 33 to 53 (ITPF…NAVY), and 59 to 79 (IKEI…IEFI).

The protein belongs to the UPF0702 family.

Its subcellular location is the cell membrane. This chain is UPF0702 transmembrane protein YetF (yetF), found in Bacillus subtilis (strain 168).